The chain runs to 429 residues: Histidine--tRNA ligase (429 aa).

The protein belongs to the class-II aminoacyl-tRNA synthetase family. Homodimer.

It is found in the cytoplasm. It carries out the reaction tRNA(His) + L-histidine + ATP = L-histidyl-tRNA(His) + AMP + diphosphate + H(+). The chain is Histidine--tRNA ligase from Stutzerimonas stutzeri (strain A1501) (Pseudomonas stutzeri).